A 311-amino-acid polypeptide reads, in one-letter code: Vomeronasal type-1 receptor 105 (311 aa).

Topologically, residues 1-17 (MMNKNSRLYTDSNIRNT) are extracellular. A helical transmembrane segment spans residues 18 to 38 (FFAEIGIGVSANSLLLLFNIF). Residues 39 to 50 (KLICGQRSRLTD) are Cytoplasmic-facing. The chain crosses the membrane as a helical span at residues 51–71 (LPIGLLSLINLLMLLMTAFIA). The Extracellular segment spans residues 72–94 (TDTFISWRGWDDIICKSLLYLYR). Cys-86 and Cys-173 are joined by a disulfide. The chain crosses the membrane as a helical span at residues 95–115 (TFRGLSLCTSCLLSVLQAIIL). Topologically, residues 116-135 (SPRSSCLAKFKHKPSHHISC) are cytoplasmic. The chain crosses the membrane as a helical span at residues 136–156 (AILSLSVLYMFISSHLLVSII). Residues 157-188 (ATPNLTTNDFIHVTQWCSILPMSYLMQSMFST) lie on the Extracellular side of the membrane. N-linked (GlcNAc...) asparagine glycosylation is present at Asn-160. The helical transmembrane segment at 189–209 (LLAIRDVFLISLMVLSTWYMV) threads the bilayer. Topologically, residues 210–239 (ALLCRHRKQTRHLQGTSLSPKASPEQRATR) are cytoplasmic. The helical transmembrane segment at 240-260 (SILMLMSLFVLMSVFDSIVCS) threads the bilayer. The Extracellular segment spans residues 261 to 271 (SRTMYLNDPIS). A helical membrane pass occupies residues 272 to 292 (YSYQLFMVHIYATVSPFVFIV). The Cytoplasmic portion of the chain corresponds to 293–311 (TEKHIVNSLRSMCVKVMNV).

This sequence belongs to the G-protein coupled receptor 1 family. Expressed in 1-4% of neurons of the vomeronasal organ. Only one pheromone receptor gene may be expressed in a particular neuron. Not expressed in the main olfactory epithelium.

The protein localises to the cell membrane. Its function is as follows. Putative pheromone receptor implicated in the regulation of social as well as reproductive behavior. The protein is Vomeronasal type-1 receptor 105 (Vom1r105) of Rattus norvegicus (Rat).